Reading from the N-terminus, the 239-residue chain is MADS-box transcription factor 34 (239 aa).

One can recognise an MADS-box domain in the interval 1–61 (MGRGKVVLQR…GRLYQFSSSS (61 aa)). The 91-residue stretch at 88 to 178 (MQNNYQEYVN…KRKLDEIDVE (91 aa)) folds into the K-box domain. Residues 179–208 (AAPPQPPWNGNCSNGHGGGGGVFSSEPPQP) are disordered.

Highly expressed in leaves and at low levels in roots and spikelets (rice flower).

The protein localises to the nucleus. Functionally, probable transcription factor. The chain is MADS-box transcription factor 34 (MADS34) from Oryza sativa subsp. japonica (Rice).